The sequence spans 864 residues: MRWIKVMAGLLPMIGSKGADEKDSSQQRRLSRVVVPEHYDLHVKILDAGFCGSVGIRVMISQDVSEIVLNAKELEIRDAGIVVEGARIPGRVVVGEAEKELEVVRIVFPSSLRAGPGYLTMEFCGDYNNGLVGLYKSGGPKEVYSTHFEPTDARWVFPCFDQPDMKATFKISIDAGSKFTVLANTQAIPSLREEYGDRKIEYFEETCKMSTYLVAFVVGELSYIEDWSKDGVRLRVYGDSSEVEWGRYGLEVGKRCLEYFSEYFGVGYEFPRAGSAKIDMVGIPNFSSGAMENWGLITFRRESLLYVPGKSNVEDMKNVAETVCHELGHMWFGNLVTMSWWDDLWLNEGFATWVSFKGMENIGSVVSWDVWGEFVLWNVVRGMVDDGLGKSHQIRMNVTDPGEIGEIFDSISYCKGASVIRMIERYVGESVFMLGIRRYIKEHMYGNGNAMSLWKAIGEEYGEDISEMVEGWISQAGYPVVSVQDCGSSLVLSQSRYSMLGKSDDSLWTIPVVVSWEGKGQERIELRGRETTVRKRSSVYKVNAEYGGFYRVLYDSAGLSGLESRIDSLSVVDRVNVIEDVFGLGFGLYGGLEHGLRRISEYYSDSYHVARSGIEKLLRLRSVFYDDAEIVSLIDKKVRKMILPCVGRIDVFDIGTSVESVSMNKYVLSVGVEVGIREAVEKVQELWRRHVEAGEELGELRWIVYKAVVDENLGYMMDKYKNGDTPGMRREVMNGFSGIKREENFLDVVGNLSQFSVEDIGVVIGSISRGGAFRDAMVEYVVSHGEELYLMVHKNAMLYNMIIMSLRHVSGDLIVEKVERFLSGIKHSGSNLSIEKVRNEIQWRRRMRGIREEVLRGLLPEAEK.

Residues Glu149 and 289-293 (GAMEN) contribute to the substrate site. His325 contributes to the Zn(2+) binding site. The Proton acceptor role is filled by Glu326. Zn(2+) is bound by residues His329 and Glu348.

This sequence belongs to the peptidase M1 family. The cofactor is Zn(2+).

The polypeptide is Probable M1 family aminopeptidase 2 (Encephalitozoon cuniculi (strain GB-M1) (Microsporidian parasite)).